The following is a 528-amino-acid chain: Protein HPH2 (528 aa).

Low complexity predominate over residues 1–13 (MQNAQIKSSSKGS). Disordered regions lie at residues 1–52 (MQNA…STVE), 170–193 (AQQH…PSRS), 230–257 (ILPN…STQT), and 270–334 (ESSP…QSVA). Residues 17–36 (GTDRNSKDGVEKRPLEDVKQ) are compositionally biased toward basic and acidic residues. Low complexity-rich tracts occupy residues 283–296 (PSVA…VANP) and 308–332 (SFSQ…FSQS). A helical membrane pass occupies residues 505–521 (ALDIVFLIIIIVICYTF).

Interacts with HPH1/FRT1. Post-translationally, phosphorylated by CDC28.

Its subcellular location is the endoplasmic reticulum membrane. Required for growth under high NaCl, alkaline pH and cell wall stress. In Saccharomyces cerevisiae (strain ATCC 204508 / S288c) (Baker's yeast), this protein is Protein HPH2 (FRT2).